The sequence spans 355 residues: Putative transport protein PH1000 (355 aa).

Transmembrane regions (helical) follow at residues 34–54 (VTWIIIITLVALAIKTILPFF), 55–75 (SPLFFAFITAYALYPLHIKLK), 84–104 (AILLTLFLLLGALMILLILVY), 158–178 (FSVPKYLLQVIVYLTFVYFFL), 212–232 (VWLLLNIVKGILMTLGFLIFK), 240–260 (ILAGLLTVLFSFIPLFEGWMI), 274–294 (IIAGIGLAVYGFTLVSPLPDF), and 310–330 (VLVLIGMIGGTWGLGLKGLII).

This sequence belongs to the autoinducer-2 exporter (AI-2E) (TC 2.A.86) family.

The protein localises to the cell membrane. The polypeptide is Putative transport protein PH1000 (Pyrococcus horikoshii (strain ATCC 700860 / DSM 12428 / JCM 9974 / NBRC 100139 / OT-3)).